Here is a 448-residue protein sequence, read N- to C-terminus: UDP-glucose 6-dehydrogenase (448 aa).

Residues 2–19 (NITF…GIIM), Val-11, Asp-30, Lys-35, Thr-121, and Glu-152 contribute to the NAD(+) site. Residues 148–152 (EFLRE), Lys-204, Asn-208, 249–253 (FLNAG), and Gly-257 contribute to the substrate site. Residue Cys-260 is the Nucleophile of the active site. Lys-263 contacts NAD(+). Lys-321 contributes to the substrate binding site. Residue Arg-328 coordinates NAD(+).

This sequence belongs to the UDP-glucose/GDP-mannose dehydrogenase family.

It catalyses the reaction UDP-alpha-D-glucose + 2 NAD(+) + H2O = UDP-alpha-D-glucuronate + 2 NADH + 3 H(+). The protein operates within nucleotide-sugar biosynthesis; UDP-alpha-D-glucuronate biosynthesis; UDP-alpha-D-glucuronate from UDP-alpha-D-glucose: step 1/1. This is UDP-glucose 6-dehydrogenase (udg) from Rickettsia felis (strain ATCC VR-1525 / URRWXCal2) (Rickettsia azadi).